The chain runs to 281 residues: Phosphatidylglycerol--prolipoprotein diacylglyceryl transferase (281 aa).

4 consecutive transmembrane segments (helical) span residues 23–43 (VGPLAVHWYGLGYVVGILFAW), 71–91 (FVIWAALGVVLGGRIGYVLFY), 107–127 (WDGGMSFHGGILGTTLAMILF), and 133–153 (ILVWSMFDTIAAGVPIGLGVV). R154 contacts a 1,2-diacyl-sn-glycero-3-phospho-(1'-sn-glycerol). Helical transmembrane passes span 189-209 (LYEAFLEGLVLFFVLFVLVWG), 217-237 (GFVAGAFVTGYGLSRIAVEFF), and 247-267 (LFGGWLTMGMVLSVPMVLLGL).

It belongs to the Lgt family.

The protein resides in the cell inner membrane. The catalysed reaction is L-cysteinyl-[prolipoprotein] + a 1,2-diacyl-sn-glycero-3-phospho-(1'-sn-glycerol) = an S-1,2-diacyl-sn-glyceryl-L-cysteinyl-[prolipoprotein] + sn-glycerol 1-phosphate + H(+). Its pathway is protein modification; lipoprotein biosynthesis (diacylglyceryl transfer). Catalyzes the transfer of the diacylglyceryl group from phosphatidylglycerol to the sulfhydryl group of the N-terminal cysteine of a prolipoprotein, the first step in the formation of mature lipoproteins. The polypeptide is Phosphatidylglycerol--prolipoprotein diacylglyceryl transferase (Brucella abortus (strain S19)).